Reading from the N-terminus, the 220-residue chain is Phosphatidylserine decarboxylase proenzyme (220 aa).

Ser188 functions as the Schiff-base intermediate with substrate; via pyruvic acid in the catalytic mechanism. Ser188 bears the Pyruvic acid (Ser); by autocatalysis mark.

This sequence belongs to the phosphatidylserine decarboxylase family. PSD-A subfamily. Heterodimer of a large membrane-associated beta subunit and a small pyruvoyl-containing alpha subunit. Requires pyruvate as cofactor. In terms of processing, is synthesized initially as an inactive proenzyme. Formation of the active enzyme involves a self-maturation process in which the active site pyruvoyl group is generated from an internal serine residue via an autocatalytic post-translational modification. Two non-identical subunits are generated from the proenzyme in this reaction, and the pyruvate is formed at the N-terminus of the alpha chain, which is derived from the carboxyl end of the proenzyme. The post-translation cleavage follows an unusual pathway, termed non-hydrolytic serinolysis, in which the side chain hydroxyl group of the serine supplies its oxygen atom to form the C-terminus of the beta chain, while the remainder of the serine residue undergoes an oxidative deamination to produce ammonia and the pyruvoyl prosthetic group on the alpha chain.

Its subcellular location is the cell membrane. It carries out the reaction a 1,2-diacyl-sn-glycero-3-phospho-L-serine + H(+) = a 1,2-diacyl-sn-glycero-3-phosphoethanolamine + CO2. It participates in phospholipid metabolism; phosphatidylethanolamine biosynthesis; phosphatidylethanolamine from CDP-diacylglycerol: step 2/2. In terms of biological role, catalyzes the formation of phosphatidylethanolamine (PtdEtn) from phosphatidylserine (PtdSer). This is Phosphatidylserine decarboxylase proenzyme from Parabacteroides distasonis (strain ATCC 8503 / DSM 20701 / CIP 104284 / JCM 5825 / NCTC 11152).